Consider the following 335-residue polypeptide: uncharacterized protein (335 aa).

A disordered region spans residues 201 to 236 (GPMAKNKARRKEDNYDTHNCDDANQDKKEEAEGKNT). A compositionally biased stretch (basic and acidic residues) spans 210-235 (RKEDNYDTHNCDDANQDKKEEAEGKN).

Its function is as follows. Dispensable for normal development and fertility. This is an uncharacterized protein from Homo sapiens (Human).